The sequence spans 469 residues: Cysteine--tRNA ligase (469 aa).

Cys33 contributes to the Zn(2+) binding site. Residues Ala35–His45 carry the 'HIGH' region motif. Zn(2+)-binding residues include Cys211, His236, and Glu240. The 'KMSKS' region motif lies at Lys267–Ser271. Lys270 is an ATP binding site.

Belongs to the class-I aminoacyl-tRNA synthetase family. Monomer. The cofactor is Zn(2+).

It localises to the cytoplasm. It carries out the reaction tRNA(Cys) + L-cysteine + ATP = L-cysteinyl-tRNA(Cys) + AMP + diphosphate. The protein is Cysteine--tRNA ligase (cysS) of Mycobacterium tuberculosis (strain CDC 1551 / Oshkosh).